The following is a 286-amino-acid chain: Neuferricin homolog (286 aa).

The N-terminal stretch at 1-23 (MFGFVKYLFKLQFLFILAAVLAG) is a signal peptide. Residues 61 to 145 (ATVLTSAELS…KPNDLLGLAN (85 aa)) enclose the Cytochrome b5 heme-binding domain. A coiled-coil region spans residues 176 to 200 (HKYLALLEQAQIAKAEVDELRSKYP).

This sequence belongs to the cytochrome b5 family. MAPR subfamily.

The protein resides in the secreted. In terms of biological role, heme-binding protein. This chain is Neuferricin homolog, found in Drosophila pseudoobscura pseudoobscura (Fruit fly).